A 598-amino-acid chain; its full sequence is 4-coumarate--CoA ligase-like 6 (598 aa).

Positions 232, 233, 234, 235, 236, and 240 each coordinate ATP. Arginine 318 is a binding site for CoA. Residues 320–389 (DLAAAARAVE…TVFPSVQIVQ (70 aa)) are SBD1. Residues glycine 367, glutamine 389, and threonine 394 each contribute to the (E)-4-coumaroyl-AMP site. Positions 389, 394, 475, and 490 each coordinate ATP. Positions 390-454 (SYGLTESTGP…IRGPVVMKGY (65 aa)) are SBD2. Residues lysine 492 and lysine 496 each coordinate (E)-4-coumaroyl-AMP. Lysine 498 and glycine 499 together coordinate CoA. Lysine 581 contributes to the ATP binding site.

Belongs to the ATP-dependent AMP-binding enzyme family. The cofactor is Mg(2+).

It catalyses the reaction (E)-4-coumarate + ATP + CoA = (E)-4-coumaroyl-CoA + AMP + diphosphate. The enzyme catalyses (E)-4-coumarate + ATP + H(+) = (E)-4-coumaroyl-AMP + diphosphate. The catalysed reaction is (E)-4-coumaroyl-AMP + CoA = (E)-4-coumaroyl-CoA + AMP + H(+). Carboxylate--CoA ligase that may use 4-coumarate as substrate. Follows a two-step reaction mechanism, wherein the carboxylate substrate first undergoes adenylation by ATP, followed by a thioesterification in the presence of CoA to yield the final CoA thioester. This Oryza sativa subsp. japonica (Rice) protein is 4-coumarate--CoA ligase-like 6 (4CLL6).